The chain runs to 176 residues: DNA repair RAD52-like protein 1, mitochondrial (176 aa).

The transit peptide at 1–37 (MAGLGLRLKAAKWTLRSGSGAVSREWSSEMGKGVRRF) directs the protein to the mitochondrion.

This sequence belongs to the RAD52 family. Interacts with WHY2. As to expression, expressed in root vascular tissue, tips of primary and secondary roots, young leaves, hydathodes, stomatal guard cells, cauline leaves, flower buds, stipules, carpels, pistils and anther filaments.

It is found in the mitochondrion. It localises to the nucleus. Its function is as follows. Plant-specific single-stranded DNA-binding protein required for efficient heterologous recombination-dependent DNA repair in nuclear and mitochondrial compartments. Forms large nucleo-protein complexes with WHY2 in mitochondria. Binds ssDNA with high affinity, but with little sequence specificity. Involved in double-stranded DNA break repair. Involved in the hydrolytic splicing pathway in mitochondrion. Facilitates the excision of two cis-spliced group II introns, NAD1 intron 2 and NAD2 intron 1. This Arabidopsis thaliana (Mouse-ear cress) protein is DNA repair RAD52-like protein 1, mitochondrial.